Here is a 65-residue protein sequence, read N- to C-terminus: Large ribosomal subunit protein bL35 (65 aa).

This sequence belongs to the bacterial ribosomal protein bL35 family.

The protein is Large ribosomal subunit protein bL35 of Caldicellulosiruptor saccharolyticus (strain ATCC 43494 / DSM 8903 / Tp8T 6331).